The following is a 341-amino-acid chain: Uroporphyrinogen decarboxylase (341 aa).

Substrate is bound by residues 23–27 (RQAGR), Asp-73, Tyr-148, Ser-203, and His-318.

Belongs to the uroporphyrinogen decarboxylase family. In terms of assembly, homodimer.

The protein localises to the cytoplasm. The enzyme catalyses uroporphyrinogen III + 4 H(+) = coproporphyrinogen III + 4 CO2. It participates in porphyrin-containing compound metabolism; protoporphyrin-IX biosynthesis; coproporphyrinogen-III from 5-aminolevulinate: step 4/4. Its function is as follows. Catalyzes the decarboxylation of four acetate groups of uroporphyrinogen-III to yield coproporphyrinogen-III. In Brucella ovis (strain ATCC 25840 / 63/290 / NCTC 10512), this protein is Uroporphyrinogen decarboxylase.